The primary structure comprises 307 residues: Ethylmalonyl-CoA decarboxylase (307 aa).

Ala-2 is subject to N-acetylalanine. Lys-217 carries the post-translational modification N6-acetyllysine; alternate. Lys-217 is modified (N6-succinyllysine; alternate). Lys-301 is subject to N6-succinyllysine.

It belongs to the enoyl-CoA hydratase/isomerase family.

It localises to the cytoplasm. It is found in the cytosol. It carries out the reaction (2S)-ethylmalonyl-CoA + H(+) = butanoyl-CoA + CO2. The enzyme catalyses (S)-methylmalonyl-CoA + H(+) = propanoyl-CoA + CO2. The catalysed reaction is (2R)-ethylmalonyl-CoA + H(+) = butanoyl-CoA + CO2. Decarboxylates ethylmalonyl-CoA, a potentially toxic metabolite, to form butyryl-CoA, suggesting it might be involved in metabolite proofreading. Acts preferentially on (S)-ethylmalonyl-CoA but also has some activity on the (R)-isomer. Also has methylmalonyl-CoA decarboxylase activity at lower level. In Homo sapiens (Human), this protein is Ethylmalonyl-CoA decarboxylase (ECHDC1).